The sequence spans 117 residues: Large ribosomal subunit protein bL20 (117 aa).

Belongs to the bacterial ribosomal protein bL20 family.

In terms of biological role, binds directly to 23S ribosomal RNA and is necessary for the in vitro assembly process of the 50S ribosomal subunit. It is not involved in the protein synthesizing functions of that subunit. This is Large ribosomal subunit protein bL20 from Symbiobacterium thermophilum (strain DSM 24528 / JCM 14929 / IAM 14863 / T).